We begin with the raw amino-acid sequence, 269 residues long: Formamidopyrimidine-DNA glycosylase (269 aa).

Proline 2 functions as the Schiff-base intermediate with DNA in the catalytic mechanism. The active-site Proton donor is glutamate 3. Lysine 57 acts as the Proton donor; for beta-elimination activity in catalysis. DNA-binding residues include histidine 90, arginine 109, and arginine 150. An FPG-type zinc finger spans residues 235–269 (QVYGKAGEQCPNCAELIQELKIGQRNTFYCSSCQV). Residue arginine 259 is the Proton donor; for delta-elimination activity of the active site.

Belongs to the FPG family. As to quaternary structure, monomer. Zn(2+) serves as cofactor.

The enzyme catalyses Hydrolysis of DNA containing ring-opened 7-methylguanine residues, releasing 2,6-diamino-4-hydroxy-5-(N-methyl)formamidopyrimidine.. It catalyses the reaction 2'-deoxyribonucleotide-(2'-deoxyribose 5'-phosphate)-2'-deoxyribonucleotide-DNA = a 3'-end 2'-deoxyribonucleotide-(2,3-dehydro-2,3-deoxyribose 5'-phosphate)-DNA + a 5'-end 5'-phospho-2'-deoxyribonucleoside-DNA + H(+). Involved in base excision repair of DNA damaged by oxidation or by mutagenic agents. Acts as a DNA glycosylase that recognizes and removes damaged bases. Has a preference for oxidized purines, such as 7,8-dihydro-8-oxoguanine (8-oxoG). Has AP (apurinic/apyrimidinic) lyase activity and introduces nicks in the DNA strand. Cleaves the DNA backbone by beta-delta elimination to generate a single-strand break at the site of the removed base with both 3'- and 5'-phosphates. This Vibrio atlanticus (strain LGP32) (Vibrio splendidus (strain Mel32)) protein is Formamidopyrimidine-DNA glycosylase.